A 366-amino-acid polypeptide reads, in one-letter code: tRNA/tmRNA (uracil-C(5))-methyltransferase (366 aa).

The S-adenosyl-L-methionine site is built by glutamine 190, tyrosine 218, asparagine 223, glutamate 239, and aspartate 299. Cysteine 324 functions as the Nucleophile in the catalytic mechanism. Catalysis depends on glutamate 358, which acts as the Proton acceptor.

The protein belongs to the class I-like SAM-binding methyltransferase superfamily. RNA M5U methyltransferase family. TrmA subfamily.

The catalysed reaction is uridine(54) in tRNA + S-adenosyl-L-methionine = 5-methyluridine(54) in tRNA + S-adenosyl-L-homocysteine + H(+). The enzyme catalyses uridine(341) in tmRNA + S-adenosyl-L-methionine = 5-methyluridine(341) in tmRNA + S-adenosyl-L-homocysteine + H(+). Functionally, dual-specificity methyltransferase that catalyzes the formation of 5-methyluridine at position 54 (m5U54) in all tRNAs, and that of position 341 (m5U341) in tmRNA (transfer-mRNA). The polypeptide is tRNA/tmRNA (uracil-C(5))-methyltransferase (Escherichia coli O17:K52:H18 (strain UMN026 / ExPEC)).